We begin with the raw amino-acid sequence, 304 residues long: GTP cyclohydrolase FolE2 (304 aa).

The protein belongs to the GTP cyclohydrolase IV family.

The catalysed reaction is GTP + H2O = 7,8-dihydroneopterin 3'-triphosphate + formate + H(+). It participates in cofactor biosynthesis; 7,8-dihydroneopterin triphosphate biosynthesis; 7,8-dihydroneopterin triphosphate from GTP: step 1/1. Its function is as follows. Converts GTP to 7,8-dihydroneopterin triphosphate. The sequence is that of GTP cyclohydrolase FolE2 from Chromohalobacter salexigens (strain ATCC BAA-138 / DSM 3043 / CIP 106854 / NCIMB 13768 / 1H11).